The chain runs to 479 residues: Polyadenylate-binding protein-interacting protein 1 (479 aa).

The tract at residues 1-114 (MSDGFDRAPG…PQQNSESAMA (114 aa)) is disordered. Ser2 carries the post-translational modification N-acetylalanine. The span at 11–33 (AGRGRSRGLGRGGGGPEGGGFPN) shows a compositional bias: gly residues. Arg21 carries the post-translational modification Omega-N-methylarginine. Over residues 45–69 (PPQPKAPGFLQPPPLRQPRTTPPPG) the composition is skewed to pro residues. Over residues 98–111 (PSSQDKIPQQNSES) the composition is skewed to polar residues. Residues 116–143 (PQVVVAPVLMSKLSVNAPEFYPSGYSSS) are PABPC1-interacting motif-2 (PAM2). Residues 157-375 (TLSEYVQDFL…LLKLVELRSS (219 aa)) form a PAIP1 middle domain (PAIP1M) region. The MIF4G domain occupies 159–376 (SEYVQDFLNH…LKLVELRSSN (218 aa)). Residues 435–455 (DYEENGTDLSGAGDPYLDDID) form a disordered region. The PABPC1-interacting motif-1 (PAM1) stretch occupies residues 440-479 (GTDLSGAGDPYLDDIDDEMDPEIEEAYEKFCLESERKRKQ).

Interacts with the RRM1-RRM2 and C-terminus regions of PABPC1 in a 1:1 stoichiometry. Interacts with EIF4A. In terms of assembly, (Microbial infection) Interacts (via PAIP1M) with human SARS coronaviruses SARS-COV and SARS-COV-2 NSP3 protein (via SARS-unique domain); the interaction increases binding affinity with PABPC1.

It localises to the cytoplasm. Acts as a coactivator in the regulation of translation initiation of poly(A)-containing mRNAs. Its stimulatory activity on translation is mediated via its action on PABPC1. Competes with PAIP2 for binding to PABPC1. Its association with EIF4A and PABPC1 may potentiate contacts between mRNA termini. May also be involved in translationally coupled mRNA turnover. Implicated with other RNA-binding proteins in the cytoplasmic deadenylation/translational and decay interplay of the FOS mRNA mediated by the major coding-region determinant of instability (mCRD) domain. In terms of biological role, (Microbial infection) Upon interaction with SARS coronavirus SARS-CoV NSP3 protein, plays an important role in viral protein synthesis. The protein is Polyadenylate-binding protein-interacting protein 1 of Homo sapiens (Human).